The chain runs to 104 residues: Nucleoid-associated protein PEPE_1483 (104 aa).

Residues Met-1–Thr-35 form a disordered region. Low complexity predominate over residues Met-8–Lys-17. Residues Lys-21 to Asn-30 show a composition bias toward basic and acidic residues.

The protein belongs to the YbaB/EbfC family. As to quaternary structure, homodimer.

It localises to the cytoplasm. Its subcellular location is the nucleoid. Its function is as follows. Binds to DNA and alters its conformation. May be involved in regulation of gene expression, nucleoid organization and DNA protection. This chain is Nucleoid-associated protein PEPE_1483, found in Pediococcus pentosaceus (strain ATCC 25745 / CCUG 21536 / LMG 10740 / 183-1w).